Reading from the N-terminus, the 137-residue chain is Small ribosomal subunit protein bS6 (137 aa).

The interval isoleucine 96 to glutamate 137 is disordered. The segment covering lysine 104–glutamate 137 has biased composition (basic and acidic residues).

Belongs to the bacterial ribosomal protein bS6 family.

Functionally, binds together with bS18 to 16S ribosomal RNA. The chain is Small ribosomal subunit protein bS6 from Shewanella piezotolerans (strain WP3 / JCM 13877).